Reading from the N-terminus, the 404-residue chain is Nuclear receptor subfamily 2 group F member 6 (404 aa).

The span at 1–15 (MAMVTGGWGGPGGDT) shows a compositional bias: gly residues. A disordered region spans residues 1–49 (MAMVTGGWGGPGGDTNGVDKAGGYPRAAEDDSASPPGAASDAEPGDEER). Positions 33–42 (ASPPGAASDA) are enriched in low complexity. Phosphoserine occurs at positions 34 and 40. The nuclear receptor DNA-binding region spans 53–128 (QVDCVVCGDK…VGMRKEAVQR (76 aa)). The NR C4-type zinc finger occupies 56–76 (CVVCGDKSSGKHYGVFTCEGC). Serine 83 is modified (phosphoserine). The NR C4-type zinc finger occupies 92–116 (CRSNRDCQIDQHHRNQCQYCRLKKC). An NR LBD domain is found at 165–393 (PVSELIAQLL…TLIRDMLLSG (229 aa)). The interval 327–404 (LQEKAQVALT…TFNWPYGSGQ (78 aa)) is important for dimerization.

This sequence belongs to the nuclear hormone receptor family. NR2 subfamily. As to quaternary structure, binds DNA as dimer; homodimer and heterodimer with NR2F2 and probably NR2F1. Interacts with THRB. Expressed in heart, placenta, liver, skeletal muscle, kidney and pancreas.

The protein resides in the nucleus. Transcription factor predominantly involved in transcriptional repression. Binds to promoter/enhancer response elements that contain the imperfect 5'-AGGTCA-3' direct or inverted repeats with various spacings which are also recognized by other nuclear hormone receptors. Involved in modulation of hormonal responses. Represses transcriptional activity of the lutropin-choriogonadotropic hormone receptor/LHCGR gene, the renin/REN gene and the oxytocin-neurophysin/OXT gene. Represses the triiodothyronine-dependent and -independent transcriptional activity of the thyroid hormone receptor gene in a cell type-specific manner. The corepressing function towards thyroid hormone receptor beta/THRB involves at least in part the inhibition of THRB binding to triiodothyronine response elements (TREs) by NR2F6. Inhibits NFATC transcription factor DNA binding and subsequently its transcriptional activity. Acts as transcriptional repressor of IL-17 expression in Th-17 differentiated CD4(+) T cells and may be involved in induction and/or maintenance of peripheral immunological tolerance and autoimmunity. Involved in development of forebrain circadian clock; is required early in the development of the locus coeruleus (LC). This chain is Nuclear receptor subfamily 2 group F member 6 (NR2F6), found in Homo sapiens (Human).